The following is a 201-amino-acid chain: Peptide deformylase (201 aa).

Positions 121 and 163 each coordinate Fe cation. Residue Glu-164 is part of the active site. His-167 is a Fe cation binding site.

This sequence belongs to the polypeptide deformylase family. Fe(2+) serves as cofactor.

The catalysed reaction is N-terminal N-formyl-L-methionyl-[peptide] + H2O = N-terminal L-methionyl-[peptide] + formate. Functionally, removes the formyl group from the N-terminal Met of newly synthesized proteins. Requires at least a dipeptide for an efficient rate of reaction. N-terminal L-methionine is a prerequisite for activity but the enzyme has broad specificity at other positions. This Synechococcus sp. (strain CC9605) protein is Peptide deformylase.